A 337-amino-acid polypeptide reads, in one-letter code: Ketol-acid reductoisomerase (NADP(+)) (337 aa).

A KARI N-terminal Rossmann domain is found at 3 to 183 (LEMFYDDDAD…GGTRAGVIKT (181 aa)). NADP(+) is bound by residues 26–29 (YGSQ), Lys49, Ser52, Ser54, and 84–87 (DTAQ). His109 is an active-site residue. Gly135 provides a ligand contact to NADP(+). Residues 184–329 (TFKDETETDL…KKLRDLMSWV (146 aa)) form the KARI C-terminal knotted domain. Mg(2+) contacts are provided by Asp192, Glu196, Glu228, and Glu232. Residue Ser253 coordinates substrate.

Belongs to the ketol-acid reductoisomerase family. It depends on Mg(2+) as a cofactor.

It carries out the reaction (2R)-2,3-dihydroxy-3-methylbutanoate + NADP(+) = (2S)-2-acetolactate + NADPH + H(+). It catalyses the reaction (2R,3R)-2,3-dihydroxy-3-methylpentanoate + NADP(+) = (S)-2-ethyl-2-hydroxy-3-oxobutanoate + NADPH + H(+). Its pathway is amino-acid biosynthesis; L-isoleucine biosynthesis; L-isoleucine from 2-oxobutanoate: step 2/4. The protein operates within amino-acid biosynthesis; L-valine biosynthesis; L-valine from pyruvate: step 2/4. Its function is as follows. Involved in the biosynthesis of branched-chain amino acids (BCAA). Catalyzes an alkyl-migration followed by a ketol-acid reduction of (S)-2-acetolactate (S2AL) to yield (R)-2,3-dihydroxy-isovalerate. In the isomerase reaction, S2AL is rearranged via a Mg-dependent methyl migration to produce 3-hydroxy-3-methyl-2-ketobutyrate (HMKB). In the reductase reaction, this 2-ketoacid undergoes a metal-dependent reduction by NADPH to yield (R)-2,3-dihydroxy-isovalerate. The polypeptide is Ketol-acid reductoisomerase (NADP(+)) (Mycobacterium bovis (strain BCG / Pasteur 1173P2)).